A 51-amino-acid chain; its full sequence is Cuticle protein CP575 (51 aa).

A Chitin-binding type R&amp;R domain is found at 1–51 (GDIIDVDNDLFEHEQDGVAGTSVHGEYEAYDAYGNEYEVKYIADHLGFRVL).

Calcified shell.

The polypeptide is Cuticle protein CP575 (Cancer pagurus (Rock crab)).